The chain runs to 571 residues: Isocitrate dehydrogenase kinase/phosphatase 2 (571 aa).

ATP contacts are provided by residues 313–319 and Lys334; that span reads APGTPGM. Asp369 is an active-site residue.

This sequence belongs to the AceK family.

Its subcellular location is the cytoplasm. It carries out the reaction L-seryl-[isocitrate dehydrogenase] + ATP = O-phospho-L-seryl-[isocitrate dehydrogenase] + ADP + H(+). Its function is as follows. Bifunctional enzyme which can phosphorylate or dephosphorylate isocitrate dehydrogenase (IDH) on a specific serine residue. This is a regulatory mechanism which enables bacteria to bypass the Krebs cycle via the glyoxylate shunt in response to the source of carbon. When bacteria are grown on glucose, IDH is fully active and unphosphorylated, but when grown on acetate or ethanol, the activity of IDH declines drastically concomitant with its phosphorylation. The sequence is that of Isocitrate dehydrogenase kinase/phosphatase 2 from Pseudoalteromonas translucida (strain TAC 125).